Consider the following 87-residue polypeptide: Small ribosomal subunit protein uS15 (87 aa).

The segment covering 1–19 (MEKARKEQLIREYATHEGD) has biased composition (basic and acidic residues). Positions 1–22 (MEKARKEQLIREYATHEGDTGS) are disordered.

It belongs to the universal ribosomal protein uS15 family. In terms of assembly, part of the 30S ribosomal subunit. Forms a bridge to the 50S subunit in the 70S ribosome, contacting the 23S rRNA.

In terms of biological role, one of the primary rRNA binding proteins, it binds directly to 16S rRNA where it helps nucleate assembly of the platform of the 30S subunit by binding and bridging several RNA helices of the 16S rRNA. Forms an intersubunit bridge (bridge B4) with the 23S rRNA of the 50S subunit in the ribosome. The protein is Small ribosomal subunit protein uS15 of Clostridium novyi (strain NT).